We begin with the raw amino-acid sequence, 256 residues long: Cell division protein DivIB (256 aa).

Topologically, residues 1–23 (MSKDLISTDEYIKIKKKRKRIKK) are cytoplasmic. The chain crosses the membrane as a helical span at residues 24–44 (IVVLFIFLISILVTLCLKIPY). One can recognise a POTRA domain in the interval 45 to 113 (FNIESIEIKG…NKLEIYVKER (69 aa)). The Extracellular segment spans residues 45–256 (FNIESIEIKG…EGNPVFYIEK (212 aa)).

The protein belongs to the FtsQ/DivIB family. DivIB subfamily.

Its subcellular location is the cell membrane. Its function is as follows. Cell division protein that may be involved in stabilizing or promoting the assembly of the division complex. This chain is Cell division protein DivIB, found in Clostridium botulinum (strain Loch Maree / Type A3).